The chain runs to 351 residues: Protein-glutamate methylesterase/protein-glutamine glutaminase 2 (351 aa).

The region spanning 4–121 (KVLVVDDSAL…PQDFNEYQDL (118 aa)) is the Response regulatory domain. Asp55 is modified (4-aspartylphosphate). The CheB-type methylesterase domain maps to 156–348 (RVINTQLVAI…DKMLNYLASL (193 aa)). Active-site residues include Ser168, His194, and Asp290.

It belongs to the CheB family. Phosphorylated by CheA. Phosphorylation of the N-terminal regulatory domain activates the methylesterase activity.

The protein resides in the cytoplasm. The catalysed reaction is [protein]-L-glutamate 5-O-methyl ester + H2O = L-glutamyl-[protein] + methanol + H(+). It carries out the reaction L-glutaminyl-[protein] + H2O = L-glutamyl-[protein] + NH4(+). Involved in chemotaxis. Part of a chemotaxis signal transduction system that modulates chemotaxis in response to various stimuli. Catalyzes the demethylation of specific methylglutamate residues introduced into the chemoreceptors (methyl-accepting chemotaxis proteins or MCP) by CheR. Also mediates the irreversible deamidation of specific glutamine residues to glutamic acid. This chain is Protein-glutamate methylesterase/protein-glutamine glutaminase 2, found in Shewanella sp. (strain MR-4).